The sequence spans 375 residues: 23S rRNA (uracil(747)-C(5))-methyltransferase RlmC (375 aa).

The [4Fe-4S] cluster site is built by C3, C11, C14, and C87. S-adenosyl-L-methionine contacts are provided by Q212, F241, E262, and N307. The active-site Nucleophile is C334.

This sequence belongs to the class I-like SAM-binding methyltransferase superfamily. RNA M5U methyltransferase family. RlmC subfamily.

It carries out the reaction uridine(747) in 23S rRNA + S-adenosyl-L-methionine = 5-methyluridine(747) in 23S rRNA + S-adenosyl-L-homocysteine + H(+). In terms of biological role, catalyzes the formation of 5-methyl-uridine at position 747 (m5U747) in 23S rRNA. In Serratia proteamaculans (strain 568), this protein is 23S rRNA (uracil(747)-C(5))-methyltransferase RlmC.